The following is a 291-amino-acid chain: Shikimate dehydrogenase (NADP(+)) (291 aa).

Residues 22 to 24 (SLS) and Thr-69 contribute to the shikimate site. Lys-73 acts as the Proton acceptor in catalysis. Residues Asn-94 and Asp-110 each coordinate shikimate. NADP(+)-binding positions include 131–135 (GSGGA) and Leu-226. Tyr-228 contributes to the shikimate binding site. Residue Gly-249 participates in NADP(+) binding.

This sequence belongs to the shikimate dehydrogenase family. Homodimer.

The enzyme catalyses shikimate + NADP(+) = 3-dehydroshikimate + NADPH + H(+). It participates in metabolic intermediate biosynthesis; chorismate biosynthesis; chorismate from D-erythrose 4-phosphate and phosphoenolpyruvate: step 4/7. In terms of biological role, involved in the biosynthesis of the chorismate, which leads to the biosynthesis of aromatic amino acids. Catalyzes the reversible NADPH linked reduction of 3-dehydroshikimate (DHSA) to yield shikimate (SA). The polypeptide is Shikimate dehydrogenase (NADP(+)) (Synechococcus sp. (strain JA-3-3Ab) (Cyanobacteria bacterium Yellowstone A-Prime)).